Reading from the N-terminus, the 44-residue chain is Protein PsbN (44 aa).

The chain crosses the membrane as a helical span at residues 6 to 26 (FFFTFFLWFLLLSVTGYSVYV).

Belongs to the PsbN family.

It localises to the plastid. It is found in the chloroplast thylakoid membrane. May play a role in photosystem I and II biogenesis. The protein is Protein PsbN of Chlamydomonas reinhardtii (Chlamydomonas smithii).